A 224-amino-acid polypeptide reads, in one-letter code: Aminopyrimidine aminohydrolase (224 aa).

D44 provides a ligand contact to substrate. C135 acts as the Nucleophile in catalysis. Y139 and Y165 together coordinate substrate. Residue E207 is the Proton donor of the active site.

It belongs to the TenA family. In terms of assembly, homotetramer.

It carries out the reaction 4-amino-5-aminomethyl-2-methylpyrimidine + H2O = 4-amino-5-hydroxymethyl-2-methylpyrimidine + NH4(+). The enzyme catalyses thiamine + H2O = 5-(2-hydroxyethyl)-4-methylthiazole + 4-amino-5-hydroxymethyl-2-methylpyrimidine + H(+). The protein operates within cofactor biosynthesis; thiamine diphosphate biosynthesis. Catalyzes an amino-pyrimidine hydrolysis reaction at the C5' of the pyrimidine moiety of thiamine compounds, a reaction that is part of a thiamine salvage pathway. Thus, catalyzes the conversion of 4-amino-5-aminomethyl-2-methylpyrimidine to 4-amino-5-hydroxymethyl-2-methylpyrimidine (HMP). To a lesser extent, is also able to catalyze the hydrolytic cleavage of thiamine; however, this thiaminase activity is unlikely to be physiologically relevant. Therefore, is involved in the regeneration of the thiamine pyrimidine from thiamine degraded products present in the environment, rather than in thiamine degradation. This Halalkalibacterium halodurans (strain ATCC BAA-125 / DSM 18197 / FERM 7344 / JCM 9153 / C-125) (Bacillus halodurans) protein is Aminopyrimidine aminohydrolase.